The following is a 426-amino-acid chain: Anaerobic glycerol-3-phosphate dehydrogenase subunit B (426 aa).

The protein belongs to the anaerobic G-3-P dehydrogenase subunit B family. In terms of assembly, composed of a catalytic GlpA/B dimer and of membrane bound GlpC. FMN serves as cofactor.

It carries out the reaction a quinone + sn-glycerol 3-phosphate = dihydroxyacetone phosphate + a quinol. Its pathway is polyol metabolism; glycerol degradation via glycerol kinase pathway; glycerone phosphate from sn-glycerol 3-phosphate (anaerobic route): step 1/1. Functionally, conversion of glycerol 3-phosphate to dihydroxyacetone. Uses fumarate or nitrate as electron acceptor. This is Anaerobic glycerol-3-phosphate dehydrogenase subunit B from Haemophilus ducreyi (strain 35000HP / ATCC 700724).